The primary structure comprises 154 residues: Deoxyuridine 5'-triphosphate nucleotidohydrolase (154 aa).

Substrate is bound by residues 72–74 (RSG), asparagine 85, 89–91 (LID), and methionine 99.

The protein belongs to the dUTPase family. Mg(2+) serves as cofactor.

It catalyses the reaction dUTP + H2O = dUMP + diphosphate + H(+). The protein operates within pyrimidine metabolism; dUMP biosynthesis; dUMP from dCTP (dUTP route): step 2/2. In terms of biological role, this enzyme is involved in nucleotide metabolism: it produces dUMP, the immediate precursor of thymidine nucleotides and it decreases the intracellular concentration of dUTP so that uracil cannot be incorporated into DNA. In Psychrobacter arcticus (strain DSM 17307 / VKM B-2377 / 273-4), this protein is Deoxyuridine 5'-triphosphate nucleotidohydrolase.